Reading from the N-terminus, the 640-residue chain is Insulin-like growth factor 1 receptor (640 aa).

Fibronectin type-III domains follow at residues 5 to 101 (VPRP…TMPA) and 107 to 200 (IPGP…VQAK). Topologically, residues 14 to 208 (EVMQIANTTM…AKTTYENFIH (195 aa)) are extracellular. N-linked (GlcNAc...) asparagine glycans are attached at residues N20, N29, N37, N173, and N186. A helical membrane pass occupies residues 209–232 (LMIALPIAVLLIVGGLVIMLYVFH). Topologically, residues 233–640 (RKRNSSRLGN…ALPLPQSSTC (408 aa)) are cytoplasmic. The IRS1- and SHC1-binding motif lies at 250-253 (NPEY). At Y253 the chain carries Phosphotyrosine. The 276-residue stretch at 272 to 547 (ITMSRELGQG…SVKDEMEAGF (276 aa)) folds into the Protein kinase domain. ATP-binding positions include 278–286 (LGQGSFGMV) and K306. D408 (proton acceptor) is an active-site residue. Phosphotyrosine; by autocatalysis is present on residues Y434, Y438, and Y439. Glycyl lysine isopeptide (Lys-Gly) (interchain with G-Cter in ubiquitin) cross-links involve residues K441 and K444. S551 carries the phosphoserine; by GSK3-beta modification. A Phosphoserine modification is found at S555. Positions 555-640 (SEENKPPEPE…ALPLPQSSTC (86 aa)) are disordered. Acidic residues predominate over residues 563-572 (PEELDLEPEN). Low complexity predominate over residues 573–589 (MESVPLDPSASSASLPL). Basic and acidic residues predominate over residues 590–599 (PDRHSGHKAE).

The protein belongs to the protein kinase superfamily. Tyr protein kinase family. Insulin receptor subfamily. Tetramer of 2 alpha and 2 beta chains linked by disulfide bonds. The alpha chains contribute to the formation of the ligand-binding domain, while the beta chain carries the kinase domain. Interacts with PIK3R1 and with the PTB/PID domains of IRS1 and SHC1 in vitro when autophosphorylated on tyrosine residues. Forms a hybrid receptor with INSR, the hybrid is a tetramer consisting of 1 alpha chain and 1 beta chain of INSR and 1 alpha chain and 1 beta chain of IGF1R. Interacts with ARRB1 and ARRB2. Interacts with GRB10. Interacts with RACK1. Interacts with SOCS1, SOCS2 and SOCS3. Interacts with 14-3-3 proteins. Interacts with NMD2. Interacts with MAP3K5. Interacts with STAT3. Interacts (nascent precursor form) with ZFAND2B. Autophosphorylated on tyrosine residues in response to ligand binding. Autophosphorylation occurs in trans, i.e. one subunit of the dimeric receptor phosphorylates tyrosine residues on the other subunit. Autophosphorylation occurs in a sequential manner; Tyr-438 is predominantly phosphorylated first, followed by phosphorylation of Tyr-434 and Tyr-439. While every single phosphorylation increases kinase activity, all three tyrosine residues in the kinase activation loop (Tyr-438, Tyr-434 and Tyr-439) have to be phosphorylated for optimal activity. Can be autophosphorylated at additional tyrosine residues (in vitro). Autophosphorylated is followed by phosphorylation of juxtamembrane tyrosines and C-terminal serines. May also be phosphorylated at Tyr-434 and Tyr-439 by mTORC2. Phosphorylation of Tyr-253 is required for IRS1- and SHC1-binding. Phosphorylation of Ser-551 by GSK-3beta restrains kinase activity and promotes cell surface expression, it requires a priming phosphorylation at Ser-555. Dephosphorylated by PTPN1. In terms of processing, polyubiquitinated at Lys-441 and Lys-444 through both 'Lys-48' and 'Lys-29' linkages, promoting receptor endocytosis and subsequent degradation by the proteasome. Ubiquitination is facilitated by pre-existing phosphorylation. Post-translationally, sumoylated with SUMO1. Controlled by regulated intramembrane proteolysis (RIP). Undergoes metalloprotease-dependent constitutive ectodomain shedding to produce a membrane-anchored 52 kDa C-Terminal fragment which is further processed by presenilin gamma-secretase to yield an intracellular 50 kDa fragment.

The protein resides in the cell membrane. It carries out the reaction L-tyrosyl-[protein] + ATP = O-phospho-L-tyrosyl-[protein] + ADP + H(+). Its activity is regulated as follows. Activated by autophosphorylation at Tyr-434, Tyr-438 and Tyr-439 on the kinase activation loop; phosphorylation at all three tyrosine residues is required for optimal kinase activity. Inhibited by MSC1609119A-1, BMS-754807, PQIP, benzimidazole pyridinone, isoquinolinedione, bis-azaindole, 3-cyanoquinoline, 2,4-bis-arylamino-1,3-pyrimidine, pyrrolopyrimidine, pyrrole-5-carboxaldehyde, picropodophyllin (PPP), tyrphostin derivatives. While most inhibitors bind to the ATP binding pocket, MSC1609119A-1 functions as allosteric inhibitor and binds close to the DFG motif and the activation loop. Functionally, receptor tyrosine kinase which mediates actions of insulin-like growth factor 1 (IGF1). Binds IGF1 with high affinity and IGF2 and insulin (INS) with a lower affinity. The activated IGF1R is involved in cell growth and survival control. IGF1R is crucial for tumor transformation and survival of malignant cell. Ligand binding activates the receptor kinase, leading to receptor autophosphorylation, and tyrosines phosphorylation of multiple substrates, that function as signaling adapter proteins including, the insulin-receptor substrates (IRS1/2), Shc and 14-3-3 proteins. Phosphorylation of IRSs proteins lead to the activation of two main signaling pathways: the PI3K-AKT/PKB pathway and the Ras-MAPK pathway. The result of activating the MAPK pathway is increased cellular proliferation, whereas activating the PI3K pathway inhibits apoptosis and stimulates protein synthesis. Phosphorylated IRS1 can activate the 85 kDa regulatory subunit of PI3K (PIK3R1), leading to activation of several downstream substrates, including protein AKT/PKB. AKT phosphorylation, in turn, enhances protein synthesis through mTOR activation and triggers the antiapoptotic effects of IGFIR through phosphorylation and inactivation of BAD. In parallel to PI3K-driven signaling, recruitment of Grb2/SOS by phosphorylated IRS1 or Shc leads to recruitment of Ras and activation of the ras-MAPK pathway. In addition to these two main signaling pathways IGF1R signals also through the Janus kinase/signal transducer and activator of transcription pathway (JAK/STAT). Phosphorylation of JAK proteins can lead to phosphorylation/activation of signal transducers and activators of transcription (STAT) proteins. In particular activation of STAT3, may be essential for the transforming activity of IGF1R. The JAK/STAT pathway activates gene transcription and may be responsible for the transforming activity. JNK kinases can also be activated by the IGF1R. IGF1 exerts inhibiting activities on JNK activation via phosphorylation and inhibition of MAP3K5/ASK1, which is able to directly associate with the IGF1R. When present in a hybrid receptor with INSR, binds IGF1. This Bos taurus (Bovine) protein is Insulin-like growth factor 1 receptor (IGF1R).